The following is a 489-amino-acid chain: UDP-N-acetylmuramate--L-alanine ligase (489 aa).

130 to 136 (GTHGKTS) provides a ligand contact to ATP.

The protein belongs to the MurCDEF family.

Its subcellular location is the cytoplasm. The catalysed reaction is UDP-N-acetyl-alpha-D-muramate + L-alanine + ATP = UDP-N-acetyl-alpha-D-muramoyl-L-alanine + ADP + phosphate + H(+). It participates in cell wall biogenesis; peptidoglycan biosynthesis. In terms of biological role, cell wall formation. The protein is UDP-N-acetylmuramate--L-alanine ligase of Corynebacterium efficiens (strain DSM 44549 / YS-314 / AJ 12310 / JCM 11189 / NBRC 100395).